The primary structure comprises 376 residues: Acetate kinase (376 aa).

Position 7 (Asn7) interacts with Mg(2+). Lys14 serves as a coordination point for ATP. Arg71 contacts substrate. The Proton donor/acceptor role is filled by Asp128. ATP-binding positions include 188 to 192 (HLGNG), 262 to 264 (DFR), and 310 to 314 (GVGEN). Glu364 is a Mg(2+) binding site.

The protein belongs to the acetokinase family. Homodimer. Requires Mg(2+) as cofactor. It depends on Mn(2+) as a cofactor.

It localises to the cytoplasm. The catalysed reaction is acetate + ATP = acetyl phosphate + ADP. It participates in metabolic intermediate biosynthesis; acetyl-CoA biosynthesis; acetyl-CoA from acetate: step 1/2. Its function is as follows. Catalyzes the formation of acetyl phosphate from acetate and ATP. Can also catalyze the reverse reaction. The chain is Acetate kinase from Mycolicibacterium smegmatis (strain ATCC 700084 / mc(2)155) (Mycobacterium smegmatis).